Reading from the N-terminus, the 389-residue chain is 8-amino-7-oxononanoate synthase (389 aa).

R23 contributes to the substrate binding site. Position 114–115 (114–115) interacts with pyridoxal 5'-phosphate; that stretch reads GY. Substrate is bound at residue H139. S185, H213, and T242 together coordinate pyridoxal 5'-phosphate. N6-(pyridoxal phosphate)lysine is present on K245. Substrate is bound at residue T357.

This sequence belongs to the class-II pyridoxal-phosphate-dependent aminotransferase family. BioF subfamily. In terms of assembly, homodimer. Pyridoxal 5'-phosphate is required as a cofactor.

It catalyses the reaction 6-carboxyhexanoyl-[ACP] + L-alanine + H(+) = (8S)-8-amino-7-oxononanoate + holo-[ACP] + CO2. It functions in the pathway cofactor biosynthesis; biotin biosynthesis. Its function is as follows. Catalyzes the decarboxylative condensation of pimeloyl-[acyl-carrier protein] and L-alanine to produce 8-amino-7-oxononanoate (AON), [acyl-carrier protein], and carbon dioxide. In Acidithiobacillus ferrooxidans (strain ATCC 23270 / DSM 14882 / CIP 104768 / NCIMB 8455) (Ferrobacillus ferrooxidans (strain ATCC 23270)), this protein is 8-amino-7-oxononanoate synthase.